Consider the following 388-residue polypeptide: Cell adhesion molecule 4 (388 aa).

A signal peptide spans 1-20 (MGRARRFQWPLLLLWAAAAG). The Ig-like V-type domain occupies 21-119 (PGTGQEVQTE…DTHHQIATLT (99 aa)). Over 25 to 324 (QEVQTENVTV…VEAQTSVPYA (300 aa)) the chain is Extracellular. Residues Asn-31 and Asn-67 are each glycosylated (N-linked (GlcNAc...) asparagine). 3 cysteine pairs are disulfide-bonded: Cys-44-Cys-104, Cys-145-Cys-199, and Cys-245-Cys-291. Ig-like C2-type domains are found at residues 124-219 (PENP…YVLD) and 224-307 (PTAR…YVLV). Asn-286 is a glycosylation site (N-linked (GlcNAc...) asparagine). Residues 325-345 (IVGGILALLVFLIICVLVGMV) traverse the membrane as a helical segment. Residues 346 to 388 (WCSVRQKGSYLTHEASGLDEQGEAREAFLNGGDGHKRKEEFFI) are Cytoplasmic-facing. Residue Ser-361 is modified to Phosphoserine.

The protein belongs to the nectin family. As to quaternary structure, monomer and homodimer. In terms of processing, N-glycosylated. In terms of tissue distribution, expressed in the brain and several organs including the kidney and liver.

The protein localises to the membrane. Its function is as follows. Involved in the cell-cell adhesion. Has calcium- and magnesium-independent cell-cell adhesion activity. May have tumor-suppressor activity. The protein is Cell adhesion molecule 4 (Cadm4) of Mus musculus (Mouse).